The following is a 352-amino-acid chain: MEVPELGPGLVERLEQLATCPLCGGPFEDPVLLACEHSFCRSCLARCWGSPAAPGSEEATPSCPCCGQPCPRRSLRSNVRLAVEVRISRGLREKLAEPGARTGRRRGGRIPTMGCLDPQGEDMRKTWRRFDVPVPKSSNSEEDLPEDYPVVKNMLHRLTADLTLDPRTAHRDLLISSDYRGVSLAPPGTPVPLDSPERFDRLRAVLGAQGFASGRHCWEVETAEGACFRDSLAKDEDAGESCYAVGAAGESVTRKGLIKLCPSEAIWAVEGRGGRLWALTAPEPTLLGGARPPPQRIRVDLDWERGRVAFYDGRSLDLLFAFQAPGPLGERVFPLLCTCDPRAPLRIVPGEA.

Residues 20 to 67 (CPLCGGPFEDPVLLACEHSFCRSCLARCWGSPAAPGSEEATPSCPCCG) form an RING-type zinc finger. Positions 98 to 118 (PGARTGRRRGGRIPTMGCLDP) are disordered. The region spanning 142–352 (EDLPEDYPVV…APLRIVPGEA (211 aa)) is the B30.2/SPRY domain.

Expressed in the hippocampus. Expression is rapidly up-regulated in granule cells of the dentate gyrus after LTP induction.

The protein localises to the cytoplasm. The catalysed reaction is S-ubiquitinyl-[E2 ubiquitin-conjugating enzyme]-L-cysteine + [acceptor protein]-L-lysine = [E2 ubiquitin-conjugating enzyme]-L-cysteine + N(6)-ubiquitinyl-[acceptor protein]-L-lysine.. Its pathway is protein modification; protein ubiquitination. Its function is as follows. Plays an inhibitory role in anti-RNA viral innate immunity by targeting the adapter DDX3X and promoting its 'Lys-48'-linked polyubiquitination. Alternatively, enhances the cGAS-STING pathway activation by promoting 'Lys-63'-linked ubiquitination of STING1, facilitating the STING1-TBK1 complex formation and STING1 activation. The chain is RING finger protein 39 (Rnf39) from Rattus norvegicus (Rat).